A 106-amino-acid polypeptide reads, in one-letter code: uncharacterized protein (106 aa).

3 helical membrane passes run 4-24, 27-47, and 78-98; these read LPVVIISIVLFFVLFFGIGFL, MLLRMSWIMAVIYPIVCLFII, and VLILVSGLAGAIVSGIAINML.

Its subcellular location is the cell membrane. This is an uncharacterized protein from Bacillus subtilis (strain 168).